We begin with the raw amino-acid sequence, 577 residues long: MLWPCLLALLLSQLNFLCAARPGPGPNFLLIMADDLGIGDLGCYGNRTLRTPHIDRLALEGVKLTQHLAAAPLCTPSRAAFLTGRYPVRSGMASHGRLGVFLFSASSGGLPPNEVTFAKLLKGQGYTTGLVGKWHLGLSCQAASDFCHHPGRHGFDRFLGTPTTNLRDCKPGGGTVFGSAQQVFVVLPMNILGAVLLAMALARWAGLARPPGWVFGVTVAAMAAVGGAYVAFLYHFRPANCFLMADFTITQQPTDYKGLTQRLASEAGDFLRRNRDTPFLLFLSFMHVHTAHFANPEFAGQSLHGAYGDAVEEMDWAVGQVLATLDKLGLANNTLVYLTSDHGAHVEELGPNGERHGGSNGIYRGGKANTWEGGIRVPGLVRWPGVIVPGQEVEEPTSNMDVFPTVARLAGAELPTDRVIDGRDLMPLLLGHVQHSEHEFLFHYCNAYLSAVAWRPHNSSSVWKAFYFTPNFDPPGSNGCFSTHVCMCHGHHVTHHDPPLLFDIARDPRERHPLTPETEPRHGEILRNMDAAARAHVATLEEAPNQLSMSNVAWKPWLQLCLPSKPHPLACRCAGDG.

An N-terminal signal peptide occupies residues 1–19 (MLWPCLLALLLSQLNFLCA). The Lumenal segment spans residues 21 to 183 (RPGPGPNFLL…GTVFGSAQQV (163 aa)). Positions 34 and 35 each coordinate Ca(2+). The N-linked (GlcNAc...) asparagine glycan is linked to Asn-46. Cys-74 provides a ligand contact to Ca(2+). Catalysis depends on Cys-74, which acts as the Nucleophile. Cys-74 bears the 3-oxoalanine (Cys) mark. His-135 is a catalytic residue. Cystine bridges form between Cys-140–Cys-147 and Cys-169–Cys-241. Residues 184 to 207 (FVVLPMNILGAVLLAMALARWAGL) traverse the membrane as a helical segment. The Cytoplasmic segment spans residues 208–211 (ARPP). A helical membrane pass occupies residues 212–233 (GWVFGVTVAAMAAVGGAYVAFL). The Lumenal portion of the chain corresponds to 234 to 577 (YHFRPANCFL…PLACRCAGDG (344 aa)). N-linked (GlcNAc...) asparagine glycosylation is present at Asn-332. The Ca(2+) site is built by Asp-341 and His-342. Intrachain disulfides connect Cys-445–Cys-488, Cys-480–Cys-486, and Cys-561–Cys-571. Asn-458 is a glycosylation site (N-linked (GlcNAc...) asparagine).

This sequence belongs to the sulfatase family. Homodimer. The cofactor is Ca(2+). In terms of processing, the conversion to 3-oxoalanine (also known as C-formylglycine, FGly), of a serine or cysteine residue in prokaryotes and of a cysteine residue in eukaryotes, is critical for catalytic activity.

It is found in the microsome membrane. The protein localises to the endoplasmic reticulum membrane. It carries out the reaction dehydroepiandrosterone 3-sulfate + H2O = 3beta-hydroxyandrost-5-en-17-one + sulfate + H(+). It catalyses the reaction estrone 3-sulfate + H2O = estrone + sulfate + H(+). In terms of biological role, catalyzes the conversion of sulfated steroid precursors, such as dehydroepiandrosterone sulfate (DHEA-S) and estrone sulfate to the free steroid. This chain is Steryl-sulfatase (Sts), found in Rattus norvegicus (Rat).